We begin with the raw amino-acid sequence, 475 residues long: Ribulose bisphosphate carboxylase large chain (475 aa).

A propeptide spanning residues 1-2 (MV) is cleaved from the precursor. Position 3 is an N-acetylproline (P3). K14 is modified (N6,N6,N6-trimethyllysine). The substrate site is built by N123 and T173. Residue K175 is the Proton acceptor of the active site. K177 serves as a coordination point for substrate. The Mg(2+) site is built by K201, D203, and E204. K201 is subject to N6-carboxylysine. The active-site Proton acceptor is the H294. R295, H327, and S379 together coordinate substrate.

It belongs to the RuBisCO large chain family. Type I subfamily. Heterohexadecamer of 8 large chains and 8 small chains; disulfide-linked. The disulfide link is formed within the large subunit homodimers. Requires Mg(2+) as cofactor. Post-translationally, the disulfide bond which can form in the large chain dimeric partners within the hexadecamer appears to be associated with oxidative stress and protein turnover.

Its subcellular location is the plastid. It is found in the chloroplast. It carries out the reaction 2 (2R)-3-phosphoglycerate + 2 H(+) = D-ribulose 1,5-bisphosphate + CO2 + H2O. The enzyme catalyses D-ribulose 1,5-bisphosphate + O2 = 2-phosphoglycolate + (2R)-3-phosphoglycerate + 2 H(+). Its function is as follows. RuBisCO catalyzes two reactions: the carboxylation of D-ribulose 1,5-bisphosphate, the primary event in carbon dioxide fixation, as well as the oxidative fragmentation of the pentose substrate in the photorespiration process. Both reactions occur simultaneously and in competition at the same active site. The sequence is that of Ribulose bisphosphate carboxylase large chain from Tetradesmus obliquus (Green alga).